Reading from the N-terminus, the 235-residue chain is Rab-like protein 3 (235 aa).

A small GTPase-like region spans residues 1 to 235 (MASLDRVKVL…GGNFKSLHYD (235 aa)). GTP is bound by residues 16 to 21 (GVGKSS), 148 to 150 (KLD), and 179 to 180 (DC).

This sequence belongs to the small GTPase superfamily. Rab family. As to quaternary structure, homodimer.

In terms of biological role, required for KRAS signaling regulation and modulation of cell proliferation. Regulator of KRAS prenylation, and probably prenylation of other small GTPases. Required for lymphocyte development and function. Not required for myeloid cell development. This is Rab-like protein 3 (rabl3) from Xenopus tropicalis (Western clawed frog).